The primary structure comprises 712 residues: Polyribonucleotide nucleotidyltransferase (712 aa).

Mg(2+)-binding residues include D487 and D493. Residues 554-613 enclose the KH domain; the sequence is PKIITMTINPDKIRDVIGPSGKQINKIIEETGVKIDIEQDGTVFISSINQEMNDKAKKII. The 69-residue stretch at 623 to 691 folds into the S1 motif domain; that stretch reads GEIYEGKVKR…KQGRVNLSRK (69 aa).

Belongs to the polyribonucleotide nucleotidyltransferase family. Requires Mg(2+) as cofactor.

Its subcellular location is the cytoplasm. The catalysed reaction is RNA(n+1) + phosphate = RNA(n) + a ribonucleoside 5'-diphosphate. Functionally, involved in mRNA degradation. Catalyzes the phosphorolysis of single-stranded polyribonucleotides processively in the 3'- to 5'-direction. The sequence is that of Polyribonucleotide nucleotidyltransferase from Bacillus cereus (strain ATCC 10987 / NRS 248).